The following is a 268-amino-acid chain: Ribosomal RNA small subunit methyltransferase A (268 aa).

Residues asparagine 18, leucine 20, glycine 45, glutamate 66, aspartate 91, and asparagine 112 each contribute to the S-adenosyl-L-methionine site.

It belongs to the class I-like SAM-binding methyltransferase superfamily. rRNA adenine N(6)-methyltransferase family. RsmA subfamily.

It localises to the cytoplasm. The enzyme catalyses adenosine(1518)/adenosine(1519) in 16S rRNA + 4 S-adenosyl-L-methionine = N(6)-dimethyladenosine(1518)/N(6)-dimethyladenosine(1519) in 16S rRNA + 4 S-adenosyl-L-homocysteine + 4 H(+). Specifically dimethylates two adjacent adenosines (A1518 and A1519) in the loop of a conserved hairpin near the 3'-end of 16S rRNA in the 30S particle. May play a critical role in biogenesis of 30S subunits. This is Ribosomal RNA small subunit methyltransferase A from Shewanella baltica (strain OS185).